Consider the following 100-residue polypeptide: NADH-quinone oxidoreductase subunit K (100 aa).

Helical transmembrane passes span 1 to 21 (MIGL…GLAG), 28 to 48 (ILLL…GFIA), and 64 to 84 (FIIA…ILWF).

This sequence belongs to the complex I subunit 4L family. NDH-1 is composed of 14 different subunits. Subunits NuoA, H, J, K, L, M, N constitute the membrane sector of the complex.

It localises to the cell inner membrane. It catalyses the reaction a quinone + NADH + 5 H(+)(in) = a quinol + NAD(+) + 4 H(+)(out). Its function is as follows. NDH-1 shuttles electrons from NADH, via FMN and iron-sulfur (Fe-S) centers, to quinones in the respiratory chain. The immediate electron acceptor for the enzyme in this species is believed to be ubiquinone. Couples the redox reaction to proton translocation (for every two electrons transferred, four hydrogen ions are translocated across the cytoplasmic membrane), and thus conserves the redox energy in a proton gradient. The chain is NADH-quinone oxidoreductase subunit K from Helicobacter acinonychis (strain Sheeba).